A 224-amino-acid chain; its full sequence is uncharacterized protein (224 aa).

This is an uncharacterized protein from Mycobacterium tuberculosis (strain ATCC 25618 / H37Rv).